Here is a 520-residue protein sequence, read N- to C-terminus: Amphoterin-induced protein 2 (520 aa).

The signal sequence occupies residues Met1–Ser37. An LRRNT domain is found at Gly38–Arg67. Topologically, residues Gly38–Thr398 are extracellular. Disulfide bonds link Cys40-Cys46 and Cys44-Cys53. The N-linked (GlcNAc...) asparagine glycan is linked to Asn57. 6 LRR repeats span residues Leu68–Val89, Lys93–Thr114, Asn117–Glu138, Val141–Gly162, His165–Gly186, and Asp192–Leu213. Asn103 carries N-linked (GlcNAc...) asparagine glycosylation. Residues Asn227–His283 form the LRRCT domain. Cystine bridges form between Cys231/Cys259 and Cys233/Cys281. N-linked (GlcNAc...) asparagine glycans are attached at residues Asn280, Asn287, Asn344, Asn372, Asn380, Asn383, and Asn387. Residues Gly288–Met378 enclose the Ig-like C2-type domain. Cys309 and Cys362 are joined by a disulfide. A helical transmembrane segment spans residues Ala399–Leu419. At Thr420–Thr520 the chain is on the cytoplasmic side. Disordered regions lie at residues Gln437–Arg458 and Ser498–Thr520.

This sequence belongs to the immunoglobulin superfamily. AMIGO family. Binds itself as well as AMIGO1 and AMIGO3. Highest levels in the lung. High levels in cerebellar granule neurons and Purkinje cells. Also in pyramidal cells between CA1 and CA3 regions of the hippocampus and granule cells of the dentate gyrus.

The protein localises to the cell membrane. Its subcellular location is the nucleus. In terms of biological role, required for depolarization-dependent survival of cultured cerebellar granule neurons. May mediate homophilic as well as heterophilic cell-cell interaction with AMIGO1 or AMIGO3. May contribute to signal transduction through its intracellular domain. This chain is Amphoterin-induced protein 2, found in Rattus norvegicus (Rat).